A 175-amino-acid polypeptide reads, in one-letter code: MAKADKATAVADIAEQFKEATATVVTEYRGLTVANLAQLRRSLGESATYTVAKNTLVKRAAAEAGIDGLDELFTGPTAIAFVQGEPVDAAKAIKAFAKEHKALVIKGGYMEGRALSIDEVNRIADLESREVLLAKLAGAMKGNLAKAAGLFNAPASQVARLAAALQEKKAAEEAA.

This sequence belongs to the universal ribosomal protein uL10 family. As to quaternary structure, part of the ribosomal stalk of the 50S ribosomal subunit. The N-terminus interacts with L11 and the large rRNA to form the base of the stalk. The C-terminus forms an elongated spine to which L12 dimers bind in a sequential fashion forming a multimeric L10(L12)X complex.

Its function is as follows. Forms part of the ribosomal stalk, playing a central role in the interaction of the ribosome with GTP-bound translation factors. This Mycobacterium sp. (strain JLS) protein is Large ribosomal subunit protein uL10.